A 207-amino-acid polypeptide reads, in one-letter code: Uracil phosphoribosyltransferase (207 aa).

5-phospho-alpha-D-ribose 1-diphosphate is bound by residues Arg-77, Arg-102, and 129 to 137 (DPMLATGGS). Residues Ile-192 and 197–199 (GDA) contribute to the uracil site. 5-phospho-alpha-D-ribose 1-diphosphate is bound at residue Asp-198.

Belongs to the UPRTase family. Mg(2+) is required as a cofactor.

It carries out the reaction UMP + diphosphate = 5-phospho-alpha-D-ribose 1-diphosphate + uracil. Its pathway is pyrimidine metabolism; UMP biosynthesis via salvage pathway; UMP from uracil: step 1/1. With respect to regulation, allosterically activated by GTP. Functionally, catalyzes the conversion of uracil and 5-phospho-alpha-D-ribose 1-diphosphate (PRPP) to UMP and diphosphate. The sequence is that of Uracil phosphoribosyltransferase from Mycoplasma mobile (strain ATCC 43663 / 163K / NCTC 11711) (Mesomycoplasma mobile).